A 565-amino-acid polypeptide reads, in one-letter code: Dihydroxy-acid dehydratase (565 aa).

Position 50 (C50) interacts with [2Fe-2S] cluster. D82 serves as a coordination point for Mg(2+). Position 123 (C123) interacts with [2Fe-2S] cluster. Residues D124 and K125 each contribute to the Mg(2+) site. Residue K125 is modified to N6-carboxylysine. [2Fe-2S] cluster is bound at residue C195. E447 contacts Mg(2+). Residue S473 is the Proton acceptor of the active site.

It belongs to the IlvD/Edd family. In terms of assembly, homodimer. [2Fe-2S] cluster is required as a cofactor. Requires Mg(2+) as cofactor.

The enzyme catalyses (2R)-2,3-dihydroxy-3-methylbutanoate = 3-methyl-2-oxobutanoate + H2O. It catalyses the reaction (2R,3R)-2,3-dihydroxy-3-methylpentanoate = (S)-3-methyl-2-oxopentanoate + H2O. It functions in the pathway amino-acid biosynthesis; L-isoleucine biosynthesis; L-isoleucine from 2-oxobutanoate: step 3/4. It participates in amino-acid biosynthesis; L-valine biosynthesis; L-valine from pyruvate: step 3/4. Functions in the biosynthesis of branched-chain amino acids. Catalyzes the dehydration of (2R,3R)-2,3-dihydroxy-3-methylpentanoate (2,3-dihydroxy-3-methylvalerate) into 2-oxo-3-methylpentanoate (2-oxo-3-methylvalerate) and of (2R)-2,3-dihydroxy-3-methylbutanoate (2,3-dihydroxyisovalerate) into 2-oxo-3-methylbutanoate (2-oxoisovalerate), the penultimate precursor to L-isoleucine and L-valine, respectively. The polypeptide is Dihydroxy-acid dehydratase (Halorhodospira halophila (strain DSM 244 / SL1) (Ectothiorhodospira halophila (strain DSM 244 / SL1))).